We begin with the raw amino-acid sequence, 368 residues long: Zinc finger protein 24 (368 aa).

Lys-22 is covalently cross-linked (Glycyl lysine isopeptide (Lys-Gly) (interchain with G-Cter in SUMO2)). A Glycyl lysine isopeptide (Lys-Gly) (interchain with G-Cter in SUMO1); alternate cross-link involves residue Lys-27. A Glycyl lysine isopeptide (Lys-Gly) (interchain with G-Cter in SUMO2); alternate cross-link involves residue Lys-27. The 83-residue stretch at 52 to 134 (RQRFRQFGYQ…TVLEDLESEL (83 aa)) folds into the SCAN box domain. Residues Ser-132 and Ser-142 each carry the phosphoserine modification. Residues Lys-147, Lys-177, and Lys-236 each participate in a glycyl lysine isopeptide (Lys-Gly) (interchain with G-Cter in SUMO2) cross-link. The C2H2-type 1 zinc-finger motif lies at 251-273 (HICDECGKHFSQGSALILHQRIH). Residues 251–301 (HICDECGKHFSQGSALILHQRIHSGEKPYGCVECGKAFSRSSILVQHQRVH) are necessary and sufficient for nuclear localization. Ser-274 carries the post-translational modification Phosphoserine. Glycyl lysine isopeptide (Lys-Gly) (interchain with G-Cter in SUMO2) cross-links involve residues Lys-277 and Lys-286. 3 consecutive C2H2-type zinc fingers follow at residues 279-301 (YGCVECGKAFSRSSILVQHQRVH), 307-329 (YKCLECGKAFSQNSGLINHQRIH), and 335-357 (YECVQCGKSYSQSSNLFRHQRRH). Ser-292 is modified (phosphoserine). Tyr-335 is subject to Phosphotyrosine. Glycyl lysine isopeptide (Lys-Gly) (interchain with G-Cter in SUMO2) cross-links involve residues Lys-361 and Lys-367.

Belongs to the krueppel C2H2-type zinc-finger protein family. In terms of processing, sumoylated. In terms of tissue distribution, expressed in many tissues except in heart.

It localises to the nucleus. Transcription factor required for myelination of differentiated oligodendrocytes. Required for the conversion of oligodendrocytes from the premyelinating to the myelinating state. In the developing central nervous system (CNS), involved in the maintenance in the progenitor stage by promoting the cell cycle. Specifically binds to the 5'-TCAT-3' DNA sequence. Has transcription repressor activity in vitro. This chain is Zinc finger protein 24 (ZNF24), found in Homo sapiens (Human).